The following is an 864-amino-acid chain: MHERYVPADVEAAAQGDWRAADAYKTKEDSQKPKFYCVSMLPYPSGKLHMGHVRNYTINDVMYRYLRMNGYNTLMPMGWDAFGMPAENAAMANGVPPAKWTYDNIDYMKGQMQSMGLAIDWSREIATCKPDYYKWNQWLFLKMLEKGIAYKKTGTVNWDPVDQTVLANEQVIDGRGWRSGALVEKREIPMYYLRITQYADELLNDLDGLGWPERVKIMQQNWIGKSFGVNFGFPYELDGEQKLLRVFTTRADTIMGVTFCAIAAEHPLATRLAQDKPELLAFIEECKRGGVAEADVATMEKKGVATGFSVKHPLTGEPVEVWIGNYVLMSYGEGAVMGVPGHDERDFAFAKKYDLPIRQVIASEGQTYSLDAWQEWYGDKETAVCVNSGKYDGLRYAEAVDAVAADLKAGGFGDKQVTWRLRDWGVSRQRYWGTPIPIIHCPSCGDVPVPEQDLPVVLPEDLVPDGSGNPLAKSEAFLNCTCPKCGAAAKRETDTMDTFVDSSWYFSRYTAPDAETMVDARTDYWMPMDQYIGGIEHAILHLLYSRFWTKVMRDLGLVKFGEPAKNLLTQGMVLNETYYREDAAGKKTWYNPLDVTVTHDDKGRPVGATLNADGQPVVLGGIEKMSKSKNNGVDPQLLIDQYGADTARLFTMFAAPPEQQLEWSGAGVEGASRFLRRVWSFGYGNREALAARAGFDAATLGDADKALRREIYSVLKQADFDYQRLQYNTVVSAAMKMLNAIDGAKGATPAVLRETYGVLLRVLYPVVPHVTFELWKTLGYADEFGALLDAPWPKVDEAALEQAEIELVLQVNGKVRGALKVAKDASRDAIEAAAVADEAFAKFSDGKPAKKIVVVPGRLVNIVV.

Positions 42–52 (PYPSGKLHMGH) match the 'HIGH' region motif. A 'KMSKS' region motif is present at residues 624 to 628 (KMSKS). Lys-627 provides a ligand contact to ATP.

This sequence belongs to the class-I aminoacyl-tRNA synthetase family.

Its subcellular location is the cytoplasm. The enzyme catalyses tRNA(Leu) + L-leucine + ATP = L-leucyl-tRNA(Leu) + AMP + diphosphate. The protein is Leucine--tRNA ligase of Burkholderia cenocepacia (strain HI2424).